The sequence spans 696 residues: DNA ligase (696 aa).

Residues 41–45 (DGQYD), 90–91 (SL), and Glu-120 contribute to the NAD(+) site. Lys-122 acts as the N6-AMP-lysine intermediate in catalysis. NAD(+) contacts are provided by Arg-143, Glu-180, Lys-296, and Lys-320. Zn(2+)-binding residues include Cys-414, Cys-417, Cys-433, and Cys-439. The 90-residue stretch at 603–692 (STPRTLEGLT…PDAVARPAEE (90 aa)) folds into the BRCT domain.

This sequence belongs to the NAD-dependent DNA ligase family. LigA subfamily. The cofactor is Mg(2+). Requires Mn(2+) as cofactor.

It carries out the reaction NAD(+) + (deoxyribonucleotide)n-3'-hydroxyl + 5'-phospho-(deoxyribonucleotide)m = (deoxyribonucleotide)n+m + AMP + beta-nicotinamide D-nucleotide.. Its function is as follows. DNA ligase that catalyzes the formation of phosphodiester linkages between 5'-phosphoryl and 3'-hydroxyl groups in double-stranded DNA using NAD as a coenzyme and as the energy source for the reaction. It is essential for DNA replication and repair of damaged DNA. The sequence is that of DNA ligase from Kineococcus radiotolerans (strain ATCC BAA-149 / DSM 14245 / SRS30216).